A 244-amino-acid chain; its full sequence is MGLELFLDLVSQPSRAVYIFAKKNGIPLELRTVDLVKGQHKSKEFLQINSLGKLPTLKDGDFILTESSAILIYLSCKYQTPDHWYPSDLQARARVHEYLGWHADCIRGTFGIPLWVQVLGPLIGVQVPKEKVERNRTAMDQALQWLEDKFLGDRPFLAGQQVTLADLMALEELMQPVALGYELFEGRPRLAAWRGRVEAFLGAELCQEAHSIILSILEQAAKKTLPTPSPEAYQAMLLRIARIP.

The 81-residue stretch at 2–82 (GLELFLDLVS…YLSCKYQTPD (81 aa)) folds into the GST N-terminal domain. Glutathione contacts are provided by residues 40–41 (HK), 53–54 (KL), 66–67 (ES), and 104–107 (DCIR). A GST C-terminal domain is found at 88–224 (DLQARARVHE…SILEQAAKKT (137 aa)).

Belongs to the GST superfamily. Theta family. Homodimer. In terms of tissue distribution, expressed at low levels in liver. In lung, expressed at low levels in ciliated bronchiolar cells, alveolar macrophages and alveolar type II cells.

The protein resides in the cytoplasm. It is found in the cytosol. It localises to the nucleus. It catalyses the reaction RX + glutathione = an S-substituted glutathione + a halide anion + H(+). In terms of biological role, conjugation of reduced glutathione to a wide number of exogenous and endogenous hydrophobic electrophiles. Has a sulfatase activity. This Homo sapiens (Human) protein is Glutathione S-transferase theta-2 (GSTT2).